The primary structure comprises 177 residues: Peptidoglycan-associated lipoprotein (177 aa).

Residues 1–32 (MSRTNISALSPMQKLARNPAVIAMTLALALAG) form the signal peptide. Cys-33 carries the N-palmitoyl cysteine lipid modification. Cys-33 carries S-diacylglycerol cysteine lipidation. In terms of domain architecture, OmpA-like spans 59–176 (QQDFTVNVGD…RAVTVLGGAG (118 aa)).

It belongs to the Pal lipoprotein family. The Tol-Pal system is composed of five core proteins: the inner membrane proteins TolA, TolQ and TolR, the periplasmic protein TolB and the outer membrane protein Pal. They form a network linking the inner and outer membranes and the peptidoglycan layer.

The protein localises to the cell outer membrane. Its function is as follows. Part of the Tol-Pal system, which plays a role in outer membrane invagination during cell division and is important for maintaining outer membrane integrity. This chain is Peptidoglycan-associated lipoprotein, found in Agrobacterium fabrum (strain C58 / ATCC 33970) (Agrobacterium tumefaciens (strain C58)).